Reading from the N-terminus, the 344-residue chain is L-rhamnose-proton symporter (344 aa).

10 consecutive transmembrane segments (helical) span residues A4–A24, W38–L58, F68–I88, M101–I121, T137–L157, L175–A195, L214–I234, I259–G279, M290–L310, and V321–G341.

It belongs to the L-rhamnose transporter (TC 2.A.7.6) family.

It localises to the cell inner membrane. It carries out the reaction L-rhamnopyranose(in) + H(+)(in) = L-rhamnopyranose(out) + H(+)(out). Its function is as follows. Uptake of L-rhamnose across the cytoplasmic membrane with the concomitant transport of protons into the cell (symport system). This chain is L-rhamnose-proton symporter, found in Salmonella agona (strain SL483).